The chain runs to 563 residues: Probable trehalase (563 aa).

Substrate is bound by residues R154, W161–D162, N198, R207–Q209, R274–E276, and G307. Active-site proton donor/acceptor residues include D309 and E517. E532 is a binding site for substrate.

Belongs to the glycosyl hydrolase 37 family.

The catalysed reaction is alpha,alpha-trehalose + H2O = alpha-D-glucose + beta-D-glucose. Functionally, involved in the regulation of trehalose content by hydrolyzing trehalose to glucose. The protein is Probable trehalase of Oryza sativa subsp. japonica (Rice).